Here is a 1485-residue protein sequence, read N- to C-terminus: Dicer-like protein 2 (1485 aa).

The segment covering 1-11 (MSSQDESASSS) has biased composition (low complexity). Residues 1–61 (MSSQDESASS…EPQPSGNGPR (61 aa)) are disordered. A Helicase ATP-binding domain is found at 72–250 (MFQASMQQNI…MEDLESSLDS (179 aa)). 85 to 92 (MDTGSGKT) serves as a coordination point for ATP. A DEAH box motif is present at residues 193 to 196 (DEAH). A Helicase C-terminal domain is found at 415-579 (KLQVLLRILR…RYENDMRELD (165 aa)). The region spanning 609 to 712 (AKGHLEHFCR…LPIRESDFVD (104 aa)) is the Dicer dsRNA-binding fold domain. RNase III domains lie at 988–1127 (AQEL…IEGG) and 1168–1358 (LGPL…VDSG). The Mg(2+) site is built by glutamate 1208, aspartate 1344, and glutamate 1347. Residues 1388 to 1469 (HPKEELGRVA…ALEVIRVWEE (82 aa)) form the DRBM domain.

This sequence belongs to the helicase family. Dicer subfamily. Mg(2+) serves as cofactor. Requires Mn(2+) as cofactor.

Functionally, dicer-like endonuclease involved in cleaving double-stranded RNA in the RNA interference (RNAi) pathway. Produces 21 to 25 bp dsRNAs (siRNAs) which target the selective destruction of homologous RNAs leading to sequence-specific suppression of gene expression, called post-transcriptional gene silencing (PTGS). Part of a broad host defense response against viral infection and transposons. The protein is Dicer-like protein 2 (DCL2) of Pyricularia oryzae (strain 70-15 / ATCC MYA-4617 / FGSC 8958) (Rice blast fungus).